A 920-amino-acid chain; its full sequence is Isoleucine--tRNA ligase (920 aa).

Residues P58–H68 carry the 'HIGH' region motif. E569 is a binding site for L-isoleucyl-5'-AMP. Residues K610 to S614 carry the 'KMSKS' region motif. Position 613 (K613) interacts with ATP. Zn(2+) is bound by residues C895, C898, C910, and C913.

It belongs to the class-I aminoacyl-tRNA synthetase family. IleS type 1 subfamily. Monomer. The cofactor is Zn(2+).

It is found in the cytoplasm. It carries out the reaction tRNA(Ile) + L-isoleucine + ATP = L-isoleucyl-tRNA(Ile) + AMP + diphosphate. In terms of biological role, catalyzes the attachment of isoleucine to tRNA(Ile). As IleRS can inadvertently accommodate and process structurally similar amino acids such as valine, to avoid such errors it has two additional distinct tRNA(Ile)-dependent editing activities. One activity is designated as 'pretransfer' editing and involves the hydrolysis of activated Val-AMP. The other activity is designated 'posttransfer' editing and involves deacylation of mischarged Val-tRNA(Ile). The sequence is that of Isoleucine--tRNA ligase from Helicobacter pylori (strain ATCC 700392 / 26695) (Campylobacter pylori).